Here is a 176-residue protein sequence, read N- to C-terminus: MSSNQQPVVLGKLGSCHGIKGWLKITAYTDSVEGIFDYSPWLIKENGEWREIKVTQWRYQGKAVVALLDGVETREQAQMLTNCEIAILPEQMNDLPADEFYWRDLIGCEVVNTTGYNMGIVDQIVETGSNDVLLVKANAKDSFGKVERMIPFVPEQFIKTVDLQGKQILVDWDPDF.

In terms of domain architecture, PRC barrel spans 96–176; sequence PADEFYWRDL…QILVDWDPDF (81 aa).

It belongs to the RimM family. As to quaternary structure, binds ribosomal protein uS19.

It localises to the cytoplasm. Its function is as follows. An accessory protein needed during the final step in the assembly of 30S ribosomal subunit, possibly for assembly of the head region. Essential for efficient processing of 16S rRNA. May be needed both before and after RbfA during the maturation of 16S rRNA. It has affinity for free ribosomal 30S subunits but not for 70S ribosomes. The sequence is that of Ribosome maturation factor RimM from Shewanella baltica (strain OS223).